Here is a 196-residue protein sequence, read N- to C-terminus: Glycerol-3-phosphate acyltransferase (196 aa).

The next 5 membrane-spanning stretches (helical) occupy residues M1–G21, I55–T75, P81–F101, A118–F138, and Y140–Q160.

This sequence belongs to the PlsY family. Probably interacts with PlsX.

The protein resides in the cell inner membrane. The enzyme catalyses an acyl phosphate + sn-glycerol 3-phosphate = a 1-acyl-sn-glycero-3-phosphate + phosphate. Its pathway is lipid metabolism; phospholipid metabolism. Functionally, catalyzes the transfer of an acyl group from acyl-phosphate (acyl-PO(4)) to glycerol-3-phosphate (G3P) to form lysophosphatidic acid (LPA). This enzyme utilizes acyl-phosphate as fatty acyl donor, but not acyl-CoA or acyl-ACP. This chain is Glycerol-3-phosphate acyltransferase, found in Blochmanniella floridana.